Reading from the N-terminus, the 206-residue chain is High frequency lysogenization protein HflD homolog (206 aa).

Belongs to the HflD family.

Its subcellular location is the cytoplasm. The protein resides in the cell inner membrane. The sequence is that of High frequency lysogenization protein HflD homolog from Pseudomonas syringae pv. syringae (strain B728a).